Consider the following 122-residue polypeptide: Basic phospholipase A2 PLA-B (122 aa).

Disulfide bonds link Cys26–Cys115, Cys28–Cys44, Cys43–Cys95, Cys49–Cys122, Cys50–Cys88, Cys57–Cys81, and Cys75–Cys86. Residues Tyr27, Gly29, and Gly31 each coordinate Ca(2+). Residue His47 is part of the active site. Asp48 contacts Ca(2+). The active site involves Asp89.

It belongs to the phospholipase A2 family. Group II subfamily. D49 sub-subfamily. Requires Ca(2+) as cofactor. As to expression, expressed by the venom gland.

Its subcellular location is the secreted. The catalysed reaction is a 1,2-diacyl-sn-glycero-3-phosphocholine + H2O = a 1-acyl-sn-glycero-3-phosphocholine + a fatty acid + H(+). Functionally, snake venom phospholipase A2 (PLA2) that displays edema-inducing activities. PLA-B is three times more active than PLA-A in edema-inducing activities. PLA2 catalyzes the calcium-dependent hydrolysis of the 2-acyl groups in 3-sn-phosphoglycerides. This Protobothrops flavoviridis (Habu) protein is Basic phospholipase A2 PLA-B.